The sequence spans 943 residues: Protein translocase subunit SecA (943 aa).

ATP is bound by residues Q90, 108-112, and D509; that span reads GEGKT. The disordered stretch occupies residues 537 to 556; sequence NEHKPPIPKQRSSKSKGGFS.

The protein belongs to the SecA family. As to quaternary structure, monomer and homodimer. Part of the essential Sec protein translocation apparatus which comprises SecA, SecYEG and auxiliary proteins SecDF. Other proteins may also be involved.

The protein localises to the cell inner membrane. The protein resides in the cellular thylakoid membrane. It localises to the cytoplasm. The enzyme catalyses ATP + H2O + cellular proteinSide 1 = ADP + phosphate + cellular proteinSide 2.. Functionally, part of the Sec protein translocase complex. Interacts with the SecYEG preprotein conducting channel. Has a central role in coupling the hydrolysis of ATP to the transfer of proteins into and across the cell membrane, serving as an ATP-driven molecular motor driving the stepwise translocation of polypeptide chains across the membrane. Probably participates in protein translocation into and across both the cytoplasmic and thylakoid membranes in cyanobacterial cells. This is Protein translocase subunit SecA from Prochlorococcus marinus (strain MIT 9301).